We begin with the raw amino-acid sequence, 777 residues long: Disintegrin and metalloproteinase domain-containing protein 5 (777 aa).

The N-terminal stretch at 1 to 16 is a signal peptide; that stretch reads MFLVLVLLTGLGRLYA. Residues 17 to 142 constitute a propeptide that is removed on maturation; the sequence is GNNPRKTFVQ…VLSGFTHMIY (126 aa). The Extracellular segment spans residues 17-706; that stretch reads GNNPRKTFVQ…RGYVVLSTKR (690 aa). N-linked (GlcNAc...) asparagine glycans are attached at residues Asn-49 and Asn-123. Positions 185–382 constitute a Peptidase M12B domain; the sequence is RYIDMYIVVN…YGLTCLRNTS (198 aa). Cystine bridges form between Cys-294/Cys-377, Cys-336/Cys-361, Cys-338/Cys-343, and Cys-456/Cys-477. The region spanning 396 to 485 is the Disintegrin domain; it reads RRICGNSIRE…DCVHDTYAQN (90 aa). The N-linked (GlcNAc...) asparagine glycan is linked to Asn-566. The 35-residue stretch at 633-667 folds into the EGF-like domain; the sequence is NNGSCNAEIHCQGRGICNNLDNCHCHKGFVPPECA. 3 disulfides stabilise this stretch: Cys-637–Cys-649, Cys-643–Cys-655, and Cys-657–Cys-666. A helical transmembrane segment spans residues 707–727; the sequence is FQLIFYIGIPVIIIVAAILIK. At 728 to 777 the chain is on the cytoplasmic side; that stretch reads QNQLGKLFCRGEKEHMSSVSEDGSRSVTLSATESKFPADTEHSNKEEDAQ. Residues 744–760 are compositionally biased toward polar residues; the sequence is SSVSEDGSRSVTLSATE. Residues 744–777 are disordered; sequence SSVSEDGSRSVTLSATESKFPADTEHSNKEEDAQ. Positions 763–777 are enriched in basic and acidic residues; the sequence is FPADTEHSNKEEDAQ.

As to quaternary structure, interacts with TEX101. Subject to proteolytic processing during epididymal transit of spermatozoa. As to expression, detected in testis.

It is found in the membrane. Its function is as follows. This is a non catalytic metalloprotease-like protein. May play a role in sperm-egg fusion. The protein is Disintegrin and metalloproteinase domain-containing protein 5 (ADAM5) of Cavia porcellus (Guinea pig).